We begin with the raw amino-acid sequence, 209 residues long: Protein Nef (209 aa).

The N-myristoyl glycine; by host moiety is linked to residue Gly2. Position 6 is a phosphoserine; by host (Ser6). Disordered regions lie at residues 16 to 35 and 43 to 71; these read IRER…AVSQ and DKCG…EVGF. Residues 47–61 show a composition bias toward low complexity; the sequence is AAASSSPAANNASCE. The acidic; interacts with host PACS1 and PACS2; stabilizes the interaction of NEF/MHC-I with host AP1M1; necessary for MHC-I internalization stretch occupies residues 65–68; that stretch reads EEEE. Residues 72–81 are SH3-binding; interaction with Src family tyrosine kinases; sequence PVRPQVPLRP. A PxxP; stabilizes the interaction of NEF/MHC-I with host AP1M1; necessary for MHC-I internalization motif is present at residues 75–78; the sequence is PQVP. The segment at 111–127 is mediates dimerization, Nef-PTE1 interaction; sequence EILDLWVYHTQGYFPDW. The interval 151–183 is binding to ATP6V1H; it reads MSPEEVEEANEGENNCLLHPISQHGMEDAEREV. The Dileucine internalization motif; necessary for CD4 internalization signature appears at 167 to 168; the sequence is LL. The Diacidic; necessary for CD4 internalization signature appears at 177 to 178; sequence ED.

It belongs to the lentivirus primate group Nef protein family. In terms of assembly, monomer; cytosolic form. Homodimer; membrane bound form. Interacts with Nef associated p21-activated kinase (PAK2); this interaction activates PAK2. Associates with the Nef-MHC-I-AP1 complex; this complex is required for MHC-I internalization. Interacts (via C-terminus) with host PI3-kinase. Interacts with host PACS1; this interaction seems to be weak. Interacts with host PACS2. Interacts with host LCK and MAPK3; these interactions inhibit the kinase activity of the latter. Interacts with host ATP6V1H; this interaction may play a role in CD4 endocytosis. Associates with the CD4-Nef-AP2 complex; this complex is required for CD4 internalization. Interacts with host AP2 subunit alpha and AP2 subunit sigma2. Interacts with TCR-zeta chain; this interaction up-regulates the Fas ligand (FasL) surface expression. Interacts with host HCK, LYN, and SRC; these interactions activate the Src family kinases. Interacts with MAP3K5; this interaction inhibits the Fas and TNFR-mediated death signals. Interacts with beta-COP and PTE1. Interacts with human RACK1; this increases Nef phosphorylation by PKC. Interacts with TP53; this interaction decreases the half-life of TP53, protecting the infected cell against p53-mediated apoptosis. The virion-associated Nef proteins are cleaved by the viral protease to release the soluble C-terminal core protein. Nef is probably cleaved concomitantly with viral structural proteins on maturation of virus particles. In terms of processing, myristoylated. Post-translationally, phosphorylated on serine residues, probably by host PKCdelta and theta.

It is found in the host cell membrane. It localises to the virion. The protein resides in the secreted. Its subcellular location is the host Golgi apparatus membrane. Functionally, factor of infectivity and pathogenicity, required for optimal virus replication. Alters numerous pathways of T-lymphocyte function and down-regulates immunity surface molecules in order to evade host defense and increase viral infectivity. Alters the functionality of other immunity cells, like dendritic cells, monocytes/macrophages and NK cells. In infected CD4(+) T-lymphocytes, down-regulates the surface MHC-I, mature MHC-II, CD4, CD28, CCR5 and CXCR4 molecules. Mediates internalization and degradation of host CD4 through the interaction of with the cytoplasmic tail of CD4, the recruitment of AP-2 (clathrin adapter protein complex 2), internalization through clathrin coated pits, and subsequent transport to endosomes and lysosomes for degradation. Diverts host MHC-I molecules to the trans-Golgi network-associated endosomal compartments by an endocytic pathway to finally target them for degradation. MHC-I down-regulation may involve AP-1 (clathrin adapter protein complex 1) or possibly Src family kinase-ZAP70/Syk-PI3K cascade recruited by PACS2. In consequence infected cells are masked for immune recognition by cytotoxic T-lymphocytes. Decreasing the number of immune receptors also prevents reinfection by more HIV particles (superinfection). Down-regulates host SERINC3 and SERINC5 thereby excluding these proteins from the viral particles. Virion infectivity is drastically higher when SERINC3 or SERINC5 are excluded from the viral envelope, because these host antiviral proteins impair the membrane fusion event necessary for subsequent virion penetration. In terms of biological role, bypasses host T-cell signaling by inducing a transcriptional program nearly identical to that of anti-CD3 cell activation. Interaction with TCR-zeta chain up-regulates the Fas ligand (FasL). Increasing surface FasL molecules and decreasing surface MHC-I molecules on infected CD4(+) cells send attacking cytotoxic CD8+ T-lymphocytes into apoptosis. Its function is as follows. Plays a role in optimizing the host cell environment for viral replication without causing cell death by apoptosis. Protects the infected cells from apoptosis in order to keep them alive until the next virus generation is ready to strike. Inhibits the Fas and TNFR-mediated death signals by blocking MAP3K5/ASK1. Decreases the half-life of TP53, protecting the infected cell against p53-mediated apoptosis. Inhibits the apoptotic signals regulated by the Bcl-2 family proteins through the formation of a Nef/PI3-kinase/PAK2 complex that leads to activation of PAK2 and induces phosphorylation of host BAD. Functionally, extracellular Nef protein targets CD4(+) T-lymphocytes for apoptosis by interacting with CXCR4 surface receptors. This Human immunodeficiency virus type 1 group M subtype A (isolate MAL) (HIV-1) protein is Protein Nef.